The sequence spans 207 residues: Outer-membrane lipoprotein LolB (207 aa).

A signal peptide spans 1–21 (MPMRKRHFYRLLPLASLLLAA). Cys-22 is lipidated: N-palmitoyl cysteine. The S-diacylglycerol cysteine moiety is linked to residue Cys-22.

This sequence belongs to the LolB family. As to quaternary structure, monomer.

The protein resides in the cell outer membrane. Plays a critical role in the incorporation of lipoproteins in the outer membrane after they are released by the LolA protein. This is Outer-membrane lipoprotein LolB from Yersinia pestis bv. Antiqua (strain Antiqua).